Consider the following 103-residue polypeptide: Protamine-2 (103 aa).

Residues 1 to 103 (MVRYRMRSLS…RTRRRRCRRH (103 aa)) are disordered. Residues serine 8 and serine 10 each carry the phosphoserine modification. Positions 8-17 (SLSERPHEVH) are enriched in basic and acidic residues. A compositionally biased stretch (low complexity) spans 18–29 (GQQVHGQDQGHN). Residues 48–103 (HRGHSHHRRRRCSRRRLHRIHRRRHRSCRRRRRRSCRHRRRHRRGCRTRRRRCRRH) show a composition bias toward basic residues.

This sequence belongs to the protamine P2 family. Interacts with TDRP. In terms of processing, proteolytic processing into mature chains is required for histone eviction during spermatogenesis. Transition proteins (TNP1 and TNP2) are required for processing. As to expression, testis.

It is found in the nucleus. Its subcellular location is the chromosome. Its function is as follows. Protamines substitute for histones in the chromatin of sperm during the haploid phase of spermatogenesis. They compact sperm DNA into a highly condensed, stable and inactive complex. This is Protamine-2 (PRM2) from Macaca nemestrina (Pig-tailed macaque).